A 355-amino-acid chain; its full sequence is 3-dehydroquinate synthase (355 aa).

NAD(+)-binding positions include 71–76 (EGEASK), 105–109 (GVVGD), 129–130 (TS), Lys-142, Lys-151, and 169–172 (TLNT). The Zn(2+) site is built by Glu-184, His-246, and His-263.

The protein belongs to the sugar phosphate cyclases superfamily. Dehydroquinate synthase family. NAD(+) serves as cofactor. Requires Co(2+) as cofactor. The cofactor is Zn(2+).

Its subcellular location is the cytoplasm. It carries out the reaction 7-phospho-2-dehydro-3-deoxy-D-arabino-heptonate = 3-dehydroquinate + phosphate. Its pathway is metabolic intermediate biosynthesis; chorismate biosynthesis; chorismate from D-erythrose 4-phosphate and phosphoenolpyruvate: step 2/7. Functionally, catalyzes the conversion of 3-deoxy-D-arabino-heptulosonate 7-phosphate (DAHP) to dehydroquinate (DHQ). The chain is 3-dehydroquinate synthase from Streptococcus mutans serotype c (strain ATCC 700610 / UA159).